Consider the following 105-residue polypeptide: MAPGASAPAASRSEDEVGQKIDRCFADSLLKVTGGVAIGIVASVAFFKSRSWPIWFGSGVGLGTGWSNCRHDFASPYVLHGKRVPAGQDSQGKPAYNIITEQHKQ.

Residues 29 to 46 (LLKVTGGVAIGIVASVAF) form a helical membrane-spanning segment. At 47–105 (FKSRSWPIWFGSGVGLGTGWSNCRHDFASPYVLHGKRVPAGQDSQGKPAYNIITEQHKQ) the chain is on the mitochondrial intermembrane side. A disordered region spans residues 85–105 (PAGQDSQGKPAYNIITEQHKQ).

It belongs to the MICOS complex subunit Mic10 family. In terms of assembly, component of the mitochondrial contact site and cristae organizing system (MICOS) complex.

The protein localises to the mitochondrion inner membrane. In terms of biological role, component of the MICOS complex, a large protein complex of the mitochondrial inner membrane that plays crucial roles in the maintenance of crista junctions, inner membrane architecture, and formation of contact sites to the outer membrane. This chain is MICOS complex subunit Mic10, found in Caenorhabditis elegans.